A 572-amino-acid polypeptide reads, in one-letter code: Proline--tRNA ligase (572 aa).

The protein belongs to the class-II aminoacyl-tRNA synthetase family. ProS type 1 subfamily. In terms of assembly, homodimer.

The protein resides in the cytoplasm. It carries out the reaction tRNA(Pro) + L-proline + ATP = L-prolyl-tRNA(Pro) + AMP + diphosphate. Functionally, catalyzes the attachment of proline to tRNA(Pro) in a two-step reaction: proline is first activated by ATP to form Pro-AMP and then transferred to the acceptor end of tRNA(Pro). As ProRS can inadvertently accommodate and process non-cognate amino acids such as alanine and cysteine, to avoid such errors it has two additional distinct editing activities against alanine. One activity is designated as 'pretransfer' editing and involves the tRNA(Pro)-independent hydrolysis of activated Ala-AMP. The other activity is designated 'posttransfer' editing and involves deacylation of mischarged Ala-tRNA(Pro). The misacylated Cys-tRNA(Pro) is not edited by ProRS. The chain is Proline--tRNA ligase from Psychrobacter arcticus (strain DSM 17307 / VKM B-2377 / 273-4).